The following is a 189-amino-acid chain: Threonylcarbamoyl-AMP synthase (189 aa).

A YrdC-like domain is found at 6-189 (TAIFTPIIDA…VLTGEQIRQG (184 aa)).

This sequence belongs to the SUA5 family. TsaC subfamily.

The protein resides in the cytoplasm. The enzyme catalyses L-threonine + hydrogencarbonate + ATP = L-threonylcarbamoyladenylate + diphosphate + H2O. Functionally, required for the formation of a threonylcarbamoyl group on adenosine at position 37 (t(6)A37) in tRNAs that read codons beginning with adenine. Catalyzes the conversion of L-threonine, HCO(3)(-)/CO(2) and ATP to give threonylcarbamoyl-AMP (TC-AMP) as the acyladenylate intermediate, with the release of diphosphate. The polypeptide is Threonylcarbamoyl-AMP synthase (Serratia proteamaculans (strain 568)).